Here is a 463-residue protein sequence, read N- to C-terminus: Kynurenine 3-monooxygenase (463 aa).

Belongs to the aromatic-ring hydroxylase family. KMO subfamily. It depends on FAD as a cofactor.

The protein localises to the mitochondrion outer membrane. The catalysed reaction is L-kynurenine + NADPH + O2 + H(+) = 3-hydroxy-L-kynurenine + NADP(+) + H2O. It participates in cofactor biosynthesis; NAD(+) biosynthesis; quinolinate from L-kynurenine: step 1/3. Catalyzes the hydroxylation of L-kynurenine (L-Kyn) to form 3-hydroxy-L-kynurenine (L-3OHKyn). Required for synthesis of quinolinic acid. The chain is Kynurenine 3-monooxygenase from Yarrowia lipolytica (strain CLIB 122 / E 150) (Yeast).